Reading from the N-terminus, the 134-residue chain is Ribosome-binding factor A (134 aa).

It belongs to the RbfA family. Monomer. Binds 30S ribosomal subunits, but not 50S ribosomal subunits or 70S ribosomes.

The protein resides in the cytoplasm. In terms of biological role, one of several proteins that assist in the late maturation steps of the functional core of the 30S ribosomal subunit. Associates with free 30S ribosomal subunits (but not with 30S subunits that are part of 70S ribosomes or polysomes). Required for efficient processing of 16S rRNA. May interact with the 5'-terminal helix region of 16S rRNA. The polypeptide is Ribosome-binding factor A (Rhizobium leguminosarum bv. trifolii (strain WSM2304)).